The chain runs to 132 residues: ATP synthase epsilon chain (132 aa).

Belongs to the ATPase epsilon chain family. F-type ATPases have 2 components, CF(1) - the catalytic core - and CF(0) - the membrane proton channel. CF(1) has five subunits: alpha(3), beta(3), gamma(1), delta(1), epsilon(1). CF(0) has three main subunits: a, b and c.

The protein resides in the cell inner membrane. Its function is as follows. Produces ATP from ADP in the presence of a proton gradient across the membrane. The chain is ATP synthase epsilon chain from Anaeromyxobacter sp. (strain Fw109-5).